Consider the following 401-residue polypeptide: NADH-ubiquinone oxidoreductase 49 kDa subunit (401 aa).

The protein belongs to the complex I 49 kDa subunit family.

The protein resides in the mitochondrion. It catalyses the reaction a ubiquinone + NADH + 5 H(+)(in) = a ubiquinol + NAD(+) + 4 H(+)(out). In terms of biological role, core subunit of the mitochondrial membrane respiratory chain NADH dehydrogenase (Complex I) that is believed to belong to the minimal assembly required for catalysis. Complex I functions in the transfer of electrons from NADH to the respiratory chain. The immediate electron acceptor for the enzyme is believed to be ubiquinone. Component of the iron-sulfur (IP) fragment of the enzyme. This chain is NADH-ubiquinone oxidoreductase 49 kDa subunit (NAD7), found in Acanthamoeba castellanii (Amoeba).